The sequence spans 119 residues: Beta-2-microglobulin (119 aa).

An N-terminal signal peptide occupies residues 1-20; the sequence is MARFVVVALLVLLSLSGLEA. The Ig-like C1-type domain occupies 25–114; the sequence is PKIQVYSRHP…VTFSTPKTVK (90 aa). Cys45 and Cys100 are disulfide-bonded.

It belongs to the beta-2-microglobulin family. Heterodimer of an alpha chain and a beta chain. Beta-2-microglobulin is the beta-chain of major histocompatibility complex class I molecules.

It localises to the secreted. Component of the class I major histocompatibility complex (MHC). Involved in the presentation of peptide antigens to the immune system. This is Beta-2-microglobulin (B2M) from Callimico goeldii (Goeldi's marmoset).